The following is a 135-amino-acid chain: Small ribosomal subunit protein eS6 (135 aa).

It belongs to the eukaryotic ribosomal protein eS6 family.

This Methanococcoides burtonii (strain DSM 6242 / NBRC 107633 / OCM 468 / ACE-M) protein is Small ribosomal subunit protein eS6.